The following is a 676-amino-acid chain: RNA helicase NPH-II (676 aa).

Positions 172–347 (FSAWISHRPV…VFLPNPAFIH (176 aa)) constitute a Helicase ATP-binding domain. 185–192 (GGTGVGKT) contacts ATP. Residues 296–299 (DEVH) carry the DEXH box motif. Positions 366-542 (NPSSRMAYIE…KFNLTLPEDL (177 aa)) constitute a Helicase C-terminal domain.

Belongs to the DEAD box helicase family. DEAH subfamily. As to quaternary structure, monomer.

The protein localises to the virion. It catalyses the reaction ATP + H2O = ADP + phosphate + H(+). Functionally, NTP-dependent helicase that catalyzes unidirectional unwinding of 3'tailed duplex RNAs and plays an important role during transcription of early mRNAs, presumably by preventing R-loop formation behind the elongating RNA polymerase. Might also play a role in the export of newly synthesized mRNA chains out of the core into the cytoplasm. Required for replication and propagation of viral particles. The chain is RNA helicase NPH-II (OPG084) from Homo sapiens (Human).